Reading from the N-terminus, the 914-residue chain is Beta-mannosidase A (914 aa).

Positions 1–20 are cleaved as a signal peptide; it reads MRFTATAAALVASSIPATLG. Asn39, Asn79, Asn230, Asn265, Asn299, Asn309, and Asn330 each carry an N-linked (GlcNAc...) asparagine glycan. The active-site Proton donor is Glu462. N-linked (GlcNAc...) asparagine glycans are attached at residues Asn591, Asn614, Asn641, Asn721, Asn744, Asn773, Asn784, and Asn909.

It belongs to the glycosyl hydrolase 2 family. Beta-mannosidase A subfamily. As to quaternary structure, homodimer.

The protein localises to the secreted. It carries out the reaction Hydrolysis of terminal, non-reducing beta-D-mannose residues in beta-D-mannosides.. It participates in glycan metabolism; N-glycan degradation. Functionally, exoglycosidase that cleaves the single beta-linked mannose residue from the non-reducing end of beta-mannosidic oligosaccharides of various complexity and length. Involved in the degradation of polymeric mannan and galactomannan. The chain is Beta-mannosidase A (mndA) from Aspergillus oryzae (strain ATCC 42149 / RIB 40) (Yellow koji mold).